The sequence spans 436 residues: MTKPIVAIVGRPNVGKSTIFNRIVGERVSIVEDTPGVTRDRIYSSGEWLTHDFNIIDTGGIEIGDAPFQTQIRAQAEIAIDEAYVIIFMVNVREGLTQSDEMVAQILYKSKKPVVLAVNKVDNMEMRTDVYDFYSLGFGEPYPISGSHGLGLGDLLDAVVSHFGEEEEDPYDEDTIRLSIIGRPNVGKSSLVNAILGEDRVIVSNVAGTTRDAIDTEYSYDGQDYVLIDTAGMRKKGKVYESTEKYSVLRALKAIERSNVVLVVIDAEQGIIEQDKRVAGYAHEQGKAVVIVVNKWDTVEKDSKTMKKFEDEVRKEFQFLDYAQIAFVSAKERTRLRTLFPYINEASENHKKRVQSSTLNEVVTGAISMNPTPTDKGRRLNVFYATQVAIEPPTFVVFVNDVELMHFSYKRYLENQIRAAFGFEGTPIHIIARKRN.

EngA-type G domains are found at residues 4-167 (PIVA…GEEE) and 176-351 (IRLS…ENHK). Residues 10-17 (GRPNVGKS), 57-61 (DTGGI), 119-122 (NKVD), 182-189 (GRPNVGKS), 229-233 (DTAGM), and 294-297 (NKWD) each bind GTP. One can recognise a KH-like domain in the interval 352–436 (KRVQSSTLNE…PIHIIARKRN (85 aa)).

The protein belongs to the TRAFAC class TrmE-Era-EngA-EngB-Septin-like GTPase superfamily. EngA (Der) GTPase family. In terms of assembly, associates with the 50S ribosomal subunit.

Functionally, GTPase that plays an essential role in the late steps of ribosome biogenesis. The sequence is that of GTPase Der from Staphylococcus aureus (strain USA300).